The chain runs to 108 residues: Protein YcgL (108 aa).

A YcgL domain is found at 12 to 96 (MFCVIYRSSK…PPEDLLKQHL (85 aa)).

The sequence is that of Protein YcgL from Shigella sonnei (strain Ss046).